A 276-amino-acid chain; its full sequence is Protease HtpX homolog (276 aa).

The helical transmembrane segment at 16–36 (LFIWFGGMIAGQTGMVIAFLV) threads the bilayer. Zn(2+) is bound at residue His130. Residue Glu131 is part of the active site. Residue His134 participates in Zn(2+) binding. The next 2 membrane-spanning stretches (helical) occupy residues 142-162 (IGTVAATIAGAIAMLANFGMF) and 173-193 (IFVMLALMFIMPMAASIIQMT). Residue Glu199 participates in Zn(2+) binding.

Belongs to the peptidase M48B family. Zn(2+) is required as a cofactor.

It is found in the cell inner membrane. The sequence is that of Protease HtpX homolog from Sulfurovum sp. (strain NBC37-1).